We begin with the raw amino-acid sequence, 286 residues long: Release factor glutamine methyltransferase (286 aa).

2 residues coordinate S-adenosyl-L-methionine: Asp-136 and Asn-179. 179–182 serves as a coordination point for substrate; it reads NPPY.

It belongs to the protein N5-glutamine methyltransferase family. PrmC subfamily.

It carries out the reaction L-glutaminyl-[peptide chain release factor] + S-adenosyl-L-methionine = N(5)-methyl-L-glutaminyl-[peptide chain release factor] + S-adenosyl-L-homocysteine + H(+). In terms of biological role, methylates the class 1 translation termination release factors RF1/PrfA and RF2/PrfB on the glutamine residue of the universally conserved GGQ motif. In Borreliella burgdorferi (strain ATCC 35210 / DSM 4680 / CIP 102532 / B31) (Borrelia burgdorferi), this protein is Release factor glutamine methyltransferase.